Reading from the N-terminus, the 1296-residue chain is DNA-directed RNA polymerase subunit beta' (1296 aa).

Zn(2+) is bound by residues Cys60, Cys62, Cys75, and Cys78. Asp535, Asp537, and Asp539 together coordinate Mg(2+). Residues Cys877, Cys954, Cys961, and Cys964 each contribute to the Zn(2+) site.

The protein belongs to the RNA polymerase beta' chain family. As to quaternary structure, the RNAP catalytic core consists of 2 alpha, 1 beta, 1 beta' and 1 omega subunit. When a sigma factor is associated with the core the holoenzyme is formed, which can initiate transcription. The cofactor is Mg(2+). Requires Zn(2+) as cofactor.

It catalyses the reaction RNA(n) + a ribonucleoside 5'-triphosphate = RNA(n+1) + diphosphate. In terms of biological role, DNA-dependent RNA polymerase catalyzes the transcription of DNA into RNA using the four ribonucleoside triphosphates as substrates. The protein is DNA-directed RNA polymerase subunit beta' of Beutenbergia cavernae (strain ATCC BAA-8 / DSM 12333 / CCUG 43141 / JCM 11478 / NBRC 16432 / NCIMB 13614 / HKI 0122).